Reading from the N-terminus, the 305-residue chain is Protoheme IX farnesyltransferase 1 (305 aa).

A run of 9 helical transmembrane segments spans residues 30–50 (IGIVNSNLVTTFTGMWLAFQF), 59–79 (LDVILFTMLGAALIIGGSGAM), 108–128 (FVLTIALSFLIVGEILLFAAS), 129–149 (FAAGMWGLAGIFAYVVLYSMW), 154–176 (HVSNTVVGSISGAIPPIIGFAAV), 180–202 (LGPGALALFLIMFAWQPPHFYAL), 232–252 (LFWILLLLPLPFLLPELGIGF), 253–273 (LTLATALNLGWLILALKGFTA), and 284–304 (FIYSLNHMTILFVSIIIFAVF).

The protein belongs to the UbiA prenyltransferase family. Protoheme IX farnesyltransferase subfamily. In terms of assembly, interacts with CtaA.

It is found in the cell membrane. It catalyses the reaction heme b + (2E,6E)-farnesyl diphosphate + H2O = Fe(II)-heme o + diphosphate. It functions in the pathway porphyrin-containing compound metabolism; heme O biosynthesis; heme O from protoheme: step 1/1. In terms of biological role, converts heme B (protoheme IX) to heme O by substitution of the vinyl group on carbon 2 of heme B porphyrin ring with a hydroxyethyl farnesyl side group. This is Protoheme IX farnesyltransferase 1 from Lysinibacillus sphaericus (strain C3-41).